A 2543-amino-acid chain; its full sequence is Highly reducing polyketide synthase GPY1 (2543 aa).

Residues 9–435 (REPIAIVSMA…GSTAHAVVEF (427 aa)) enclose the Ketosynthase family 3 (KS3) domain. Active-site for beta-ketoacyl synthase activity residues include C182, H318, and H358. The malonyl-CoA:ACP transacylase (MAT) domain stretch occupies residues 574–881 (TFTGQGAMWS…PFFATMLRNA (308 aa)). The interval 953-1089 (HEILGSRCRG…GRAAVLETSK (137 aa)) is N-terminal hotdog fold. The tract at residues 953–1253 (HEILGSRCRG…GLQMDRATSD (301 aa)) is dehydratase (DH) domain. The PKS/mFAS DH domain occupies 953-1256 (HEILGSRCRG…MDRATSDDNT (304 aa)). H985 acts as the Proton acceptor; for dehydratase activity in catalysis. A C-terminal hotdog fold region spans residues 1103 to 1256 (MPLKVPLKSY…MDRATSDDNT (154 aa)). D1169 functions as the Proton donor; for dehydratase activity in the catalytic mechanism. The interval 1399–1587 (NDLLYRFYEE…LDEWRNELAA (189 aa)) is methyltransferase (CMet) domain. The tract at residues 1830–2136 (GILESLTMAQ…IEGTSNKQVV (307 aa)) is enoyl reductase (ER) domain. The ketoreductase (KR) domain stretch occupies residues 2161–2335 (TYIITGGLGG…ASSVDLGFVE (175 aa)). One can recognise a Carrier domain in the interval 2464-2541 (ALQPFVCTAL…DLSARVSRMI (78 aa)). The residue at position 2501 (S2501) is an O-(pantetheine 4'-phosphoryl)serine.

Highly reducing polyketide synthase; part of the gene cluster that mediates the biosynthesis of gibepyrone A, a 2H-pyran-2-one metabolite exhibiting a moderate antimicrobial activity against Gram-positive bacteria and yeasts. The highly reducing polyketide synthase GPY1 is sufficient to produce gibepyrone A. GPY1 uses an acetyl-CoA starter unit, three malonyl-CoA extender units, and two SAM-dependent methylations to establish the gibepyrone A carbon backbone, followed by product release upon intramolecular cyclization. The gibepyrone A derivatives gibepyrones B and D are produced by cluster-independent P450 monooxygenases, probably to protect the fungus from the toxic product. In contrast, the formation of gibepyrones E and F from gibepyrone A is a spontaneous process and independent of enzymatic activity. This Gibberella fujikuroi (strain CBS 195.34 / IMI 58289 / NRRL A-6831) (Bakanae and foot rot disease fungus) protein is Highly reducing polyketide synthase GPY1.